Here is a 260-residue protein sequence, read N- to C-terminus: POLG alternative reading frame (260 aa).

Disordered regions lie at residues 1–50 and 108–219; these read MEPK…LRPR and ARRG…RRGG. Low complexity-rich tracts occupy residues 36–48, 116–154, and 164–186; these read AGSSSGALGLQLR, GRGAPQRRAPAEARALGAASRALARRGAAPAAPLRGQPG, and AEPALPGGGQLAVAGPAAPEAPG. Positions 104 to 130 are required for nucleolar localization; the sequence is ANLRARRGDAWRGRGAPQRRAPAEARA. 2 stretches are compositionally biased toward gly residues: residues 187–199 and 209–219; these read LGLGGGLDPVRPR and RGAGPGVRRGG.

In terms of assembly, interacts with C1QBP; the interaction results in nucleolar localization of C1QBP, probably due to prevention of C1QBP maturation and redirection from mitochondria to nucleoli. Undergoes proteolytic cleavage to produce a secreted C-terminal fragment.

It is found in the nucleus. It localises to the nucleolus. Its subcellular location is the secreted. This is POLG alternative reading frame from Homo sapiens (Human).